Consider the following 333-residue polypeptide: Zinc-type alcohol dehydrogenase-like protein SACOL2177 (333 aa).

Belongs to the zinc-containing alcohol dehydrogenase family. Quinone oxidoreductase subfamily.

This is Zinc-type alcohol dehydrogenase-like protein SACOL2177 from Staphylococcus aureus (strain COL).